We begin with the raw amino-acid sequence, 283 residues long: 1D-myo-inositol 2-acetamido-2-deoxy-alpha-D-glucopyranoside deacetylase (283 aa).

His15, Asp18, and His150 together coordinate Zn(2+).

It belongs to the MshB deacetylase family. It depends on Zn(2+) as a cofactor.

It carries out the reaction 1D-myo-inositol 2-acetamido-2-deoxy-alpha-D-glucopyranoside + H2O = 1D-myo-inositol 2-amino-2-deoxy-alpha-D-glucopyranoside + acetate. In terms of biological role, catalyzes the deacetylation of 1D-myo-inositol 2-acetamido-2-deoxy-alpha-D-glucopyranoside (GlcNAc-Ins) in the mycothiol biosynthesis pathway. This chain is 1D-myo-inositol 2-acetamido-2-deoxy-alpha-D-glucopyranoside deacetylase, found in Actinosynnema mirum (strain ATCC 29888 / DSM 43827 / JCM 3225 / NBRC 14064 / NCIMB 13271 / NRRL B-12336 / IMRU 3971 / 101).